An 83-amino-acid chain; its full sequence is U5-theraphotoxin-Hs1b 2 (83 aa).

The N-terminal stretch at 1–21 (MQTSMFLTLTGLVLLFVVCYA) is a signal peptide. A propeptide spanning residues 22-49 (SESEEKEFPKELLSSIFAADSDFKEEER) is cleaved from the precursor. 3 disulfides stabilise this stretch: cysteine 51–cysteine 63, cysteine 56–cysteine 68, and cysteine 62–cysteine 75.

This sequence belongs to the neurotoxin 10 (Hwtx-1) family. 51 (Hntx-8) subfamily. Hntx-8 sub-subfamily. Expressed by the venom gland.

The protein resides in the secreted. Agglutinates erythrocytes. The chain is U5-theraphotoxin-Hs1b 2 from Cyriopagopus schmidti (Chinese bird spider).